The following is a 324-amino-acid chain: Beta-ketoacyl-[acyl-carrier-protein] synthase III (324 aa).

Catalysis depends on residues Cys112 and His249. Residues 250 to 254 are ACP-binding; that stretch reads QANRR. Asn279 is a catalytic residue.

This sequence belongs to the thiolase-like superfamily. FabH family. As to quaternary structure, homodimer.

Its subcellular location is the cytoplasm. The catalysed reaction is malonyl-[ACP] + acetyl-CoA + H(+) = 3-oxobutanoyl-[ACP] + CO2 + CoA. It functions in the pathway lipid metabolism; fatty acid biosynthesis. Catalyzes the condensation reaction of fatty acid synthesis by the addition to an acyl acceptor of two carbons from malonyl-ACP. Catalyzes the first condensation reaction which initiates fatty acid synthesis and may therefore play a role in governing the total rate of fatty acid production. Possesses both acetoacetyl-ACP synthase and acetyl transacylase activities. Its substrate specificity determines the biosynthesis of branched-chain and/or straight-chain of fatty acids. The chain is Beta-ketoacyl-[acyl-carrier-protein] synthase III from Streptococcus equi subsp. equi (strain 4047).